The following is a 156-amino-acid chain: ATP synthase subunit b (156 aa).

The helical transmembrane segment at 7 to 29 (LIGQLIAFALFTWFCVKFVWPPI) threads the bilayer.

The protein belongs to the ATPase B chain family. In terms of assembly, F-type ATPases have 2 components, F(1) - the catalytic core - and F(0) - the membrane proton channel. F(1) has five subunits: alpha(3), beta(3), gamma(1), delta(1), epsilon(1). F(0) has three main subunits: a(1), b(2) and c(10-14). The alpha and beta chains form an alternating ring which encloses part of the gamma chain. F(1) is attached to F(0) by a central stalk formed by the gamma and epsilon chains, while a peripheral stalk is formed by the delta and b chains.

It localises to the cell inner membrane. Functionally, f(1)F(0) ATP synthase produces ATP from ADP in the presence of a proton or sodium gradient. F-type ATPases consist of two structural domains, F(1) containing the extramembraneous catalytic core and F(0) containing the membrane proton channel, linked together by a central stalk and a peripheral stalk. During catalysis, ATP synthesis in the catalytic domain of F(1) is coupled via a rotary mechanism of the central stalk subunits to proton translocation. Component of the F(0) channel, it forms part of the peripheral stalk, linking F(1) to F(0). The sequence is that of ATP synthase subunit b from Actinobacillus succinogenes (strain ATCC 55618 / DSM 22257 / CCUG 43843 / 130Z).